The sequence spans 400 residues: Elongation factor Tu (400 aa).

A tr-type G domain is found at Lys-10 to Arg-210. Residues Gly-19–Thr-26 are G1. Gly-19–Thr-26 is a GTP binding site. Thr-26 contacts Mg(2+). The interval Gly-60 to Ala-64 is G2. Residues Asp-81–Gly-84 form a G3 region. Residues Asp-81–His-85 and Asn-136–Asp-139 each bind GTP. The G4 stretch occupies residues Asn-136–Asp-139. The tract at residues Ser-174–Ile-176 is G5.

This sequence belongs to the TRAFAC class translation factor GTPase superfamily. Classic translation factor GTPase family. EF-Tu/EF-1A subfamily. As to quaternary structure, monomer.

Its subcellular location is the cytoplasm. It carries out the reaction GTP + H2O = GDP + phosphate + H(+). GTP hydrolase that promotes the GTP-dependent binding of aminoacyl-tRNA to the A-site of ribosomes during protein biosynthesis. In Dehalococcoides mccartyi (strain CBDB1), this protein is Elongation factor Tu.